The primary structure comprises 213 residues: CDP-diacylglycerol--inositol 3-phosphatidyltransferase (213 aa).

The Cytoplasmic portion of the chain corresponds to 1–5 (MPEEN). The chain crosses the membrane as a helical span at residues 6–26 (IFLFVPNLIGYARIVFAIISF). Tyr-27 is a topological domain (lumenal). Residues 28–48 (FMPCCPFTASSFYLLSGLLDA) form a helical membrane-spanning segment. Asp-47 and Asp-50 together coordinate Mg(2+). The Cytoplasmic portion of the chain corresponds to 49–73 (FDGHAARALNQGTRFGAMLDMLTDR). 3 residues coordinate a CDP-1,2-diacyl-sn-glycerol: Gly-51, Arg-55, and Thr-61. 2 residues coordinate Mg(2+): Asp-68 and Asp-72. Residue Asp-72 is the Proton acceptor of the active site. A helical membrane pass occupies residues 74 to 94 (CATMCLLVNLALLYPRATLLF). Residue Gln-95 is a topological domain, lumenal. Residues 96–116 (LSMSLDVASHWLHLHSSVVRG) traverse the membrane as a helical segment. At 117-139 (SESHKMIDLSGNPVLRIYYTSRP) the chain is on the cytoplasmic side. The helical transmembrane segment at 140–160 (ALFTLCAGNELFYCLLYLFNF) threads the bilayer. The Lumenal portion of the chain corresponds to 161-174 (SEGPLVGSVGLFRM). A helical transmembrane segment spans residues 175–195 (GLWITAPIALLKSIISVIHLV). The Cytoplasmic portion of the chain corresponds to 196-213 (TAARNMAALDAADRAKKK).

Belongs to the CDP-alcohol phosphatidyltransferase class-I family. It depends on Mn(2+) as a cofactor. Mg(2+) serves as cofactor. As to expression, detected in liver (at protein level). Widely expressed. Highly expressed in the brain and kidney; lower levels in heart, spleen, lung, liver, skeletal muscle and testis.

The protein localises to the endoplasmic reticulum membrane. It localises to the cell membrane. It catalyses the reaction a CDP-1,2-diacyl-sn-glycerol + myo-inositol = a 1,2-diacyl-sn-glycero-3-phospho-(1D-myo-inositol) + CMP + H(+). Its function is as follows. Catalyzes the biosynthesis of phosphatidylinositol (PtdIns) as well as PtdIns:inositol exchange reaction. May thus act to reduce an excessive cellular PtdIns content. The exchange activity is due to the reverse reaction of PtdIns synthase and is dependent on CMP, which is tightly bound to the enzyme. This Rattus norvegicus (Rat) protein is CDP-diacylglycerol--inositol 3-phosphatidyltransferase.